The primary structure comprises 96 residues: Ubiquitin-related modifier 1 (96 aa).

Glycine 96 is modified (1-thioglycine). Glycine 96 participates in a covalent cross-link: Glycyl lysine isopeptide (Gly-Lys) (interchain with K-? in acceptor proteins).

The protein belongs to the URM1 family. C-terminal thiocarboxylation occurs in 2 steps, it is first acyl-adenylated (-COAMP) via the hesA/moeB/thiF part of UBA4, then thiocarboxylated (-COSH) via the rhodanese domain of UBA4.

It is found in the cytoplasm. It participates in tRNA modification; 5-methoxycarbonylmethyl-2-thiouridine-tRNA biosynthesis. Its function is as follows. Acts as a sulfur carrier required for 2-thiolation of mcm(5)S(2)U at tRNA wobble positions of cytosolic tRNA(Lys), tRNA(Glu) and tRNA(Gln). Serves as sulfur donor in tRNA 2-thiolation reaction by being thiocarboxylated (-COSH) at its C-terminus by the MOCS3 homolog UBA4. The sulfur is then transferred to tRNA to form 2-thiolation of mcm(5)S(2)U. Prior mcm(5) tRNA modification by the elongator complex is required for 2-thiolation. Also acts as a ubiquitin-like protein (UBL) that is covalently conjugated via an isopeptide bond to lysine residues of target proteins such as AHP1. The thiocarboxylated form serves as substrate for conjugation and oxidative stress specifically induces the formation of UBL-protein conjugates. The protein is Ubiquitin-related modifier 1 of Encephalitozoon cuniculi (strain GB-M1) (Microsporidian parasite).